The sequence spans 68 residues: Large ribosomal subunit protein eL24 (68 aa).

4 residues coordinate Zn(2+): Cys-7, Cys-10, Cys-33, and Cys-37. Residues 7–37 (CSYCGREFEPGTGKMFVRNDGRVLFFCSSKC) form a C4-type zinc finger.

It belongs to the eukaryotic ribosomal protein eL24 family. In terms of assembly, part of the 50S ribosomal subunit. Forms a cluster with proteins L3 and L14. Requires Zn(2+) as cofactor.

Binds to the 23S rRNA. The chain is Large ribosomal subunit protein eL24 from Thermococcus onnurineus (strain NA1).